The sequence spans 84 residues: Large ribosomal subunit protein bL27 (84 aa).

It belongs to the bacterial ribosomal protein bL27 family.

The protein is Large ribosomal subunit protein bL27 of Kocuria rhizophila (strain ATCC 9341 / DSM 348 / NBRC 103217 / DC2201).